The primary structure comprises 389 residues: Large envelope protein (389 aa).

Met-1 carries the N-acetylmethionine modification. The N-myristoyl glycine; by host moiety is linked to residue Gly-2. Residues 2-108 (GTNLSVPNPL…PPLRDTHPQA (107 aa)) form a pre-S1 region. Residues 2–163 (GTNLSVPNPL…LSKTGDPVPN (162 aa)) form a pre-S region. Residues 2 to 170 (GTNLSVPNPL…VPNMENIASG (169 aa)) lie on the Virion surface; in external conformation side of the membrane. The Intravirion; in internal conformation portion of the chain corresponds to 2–242 (GTNLSVPNPL…PGYRWMCLRR (241 aa)). The interval 74–103 (LTTVPAAPPPASTNRQSGRQPTPLSPPLRD) is disordered. Polar residues predominate over residues 85 to 95 (STNRQSGRQPT). The pre-S2 stretch occupies residues 109–163 (MQWNSTTFHQTLQDPGVRALYFPAGGSSSGTVSPAQNTVSAISSILSKTGDPVPN). Residues 171 to 191 (LLGPLLVLQAGFFLLTKILTI) traverse the membrane as a helical segment. The Intravirion; in external conformation portion of the chain corresponds to 192-242 (PQSLDSWWTSLNFLGGTPVCLGQNSQSQISSHSPTCCPPICPGYRWMCLRR). Residues 243-263 (FIIFLCILLLCLIFLLVLLDY) form a helical membrane-spanning segment. Over 264–337 (QGMLPVCPLI…WASVRFSWLS (74 aa)) the chain is Virion surface. The N-linked (GlcNAc...) asparagine; by host glycan is linked to Asn-309. A helical transmembrane segment spans residues 338–358 (LLVPFVQWFVGLSPTVWLSVI). Topologically, residues 359-364 (WMIWFW) are intravirion. Residues 365–387 (GPSLYNILSPFMPLLPIFFCLWV) form a helical membrane-spanning segment. Residues 388 to 389 (YI) lie on the Virion surface side of the membrane.

This sequence belongs to the orthohepadnavirus major surface antigen family. In terms of assembly, interacts (via its myristoylated pre-S1 region) with the host SLC10A1/NTCP; this interaction is essential for viral entry. In its internal form (Li-HBsAg), interacts with the capsid protein and with the isoform S. Interacts with host chaperone CANX. As to quaternary structure, associates with host chaperone CANX through its pre-S2 N glycan; this association may be essential for isoform M proper secretion. In terms of assembly, interacts with isoform L. Interacts with the antigens of satellite virus HDV (HDVAgs); this interaction is required for encapsidation of HDV genomic RNA. In terms of processing, isoform M is N-terminally acetylated by host at a ratio of 90%, and N-glycosylated by host at the pre-S2 region. Myristoylated; this modification is essential for its interaction with the host protein SLC10A1/NTCP.

It localises to the virion membrane. Its function is as follows. The large envelope protein exists in two topological conformations, one which is termed 'external' or Le-HBsAg and the other 'internal' or Li-HBsAg. In its external conformation the protein attaches the virus to cell receptors and thereby initiating infection. This interaction determines the species specificity and liver tropism. This attachment induces virion internalization predominantly through caveolin-mediated endocytosis. The large envelope protein also assures fusion between virion membrane and endosomal membrane. In its internal conformation the protein plays a role in virion morphogenesis and mediates the contact with the nucleocapsid like a matrix protein. Functionally, the middle envelope protein plays an important role in the budding of the virion. It is involved in the induction of budding in a nucleocapsid independent way. In this process the majority of envelope proteins bud to form subviral lipoprotein particles of 22 nm of diameter that do not contain a nucleocapsid. The sequence is that of Large envelope protein from Hepatitis B virus genotype B/C subtype adw (isolate Okinawa/pODW282/1998) (HBV-B).